The chain runs to 921 residues: Protein translocase subunit SecA (921 aa).

ATP-binding positions include Gln87, 105-109, and Asp516; that span reads GEGKT. Residues Cys905, Cys907, Cys916, and His917 each coordinate Zn(2+).

It belongs to the SecA family. Monomer and homodimer. Part of the essential Sec protein translocation apparatus which comprises SecA, SecYEG and auxiliary proteins SecDF-YajC and YidC. Zn(2+) is required as a cofactor.

The protein resides in the cell inner membrane. It is found in the cytoplasm. It carries out the reaction ATP + H2O + cellular proteinSide 1 = ADP + phosphate + cellular proteinSide 2.. Part of the Sec protein translocase complex. Interacts with the SecYEG preprotein conducting channel. Has a central role in coupling the hydrolysis of ATP to the transfer of proteins into and across the cell membrane, serving both as a receptor for the preprotein-SecB complex and as an ATP-driven molecular motor driving the stepwise translocation of polypeptide chains across the membrane. This Polaromonas sp. (strain JS666 / ATCC BAA-500) protein is Protein translocase subunit SecA.